A 76-amino-acid chain; its full sequence is Small ribosomal subunit protein eS17 (76 aa).

It belongs to the eukaryotic ribosomal protein eS17 family.

This Metallosphaera sedula (strain ATCC 51363 / DSM 5348 / JCM 9185 / NBRC 15509 / TH2) protein is Small ribosomal subunit protein eS17.